Consider the following 143-residue polypeptide: Nucleoside diphosphate kinase (143 aa).

Residues Lys11, Phe59, Arg87, Thr93, Arg104, and Asn114 each contribute to the ATP site. The active-site Pros-phosphohistidine intermediate is His117.

It belongs to the NDK family. Homotetramer. Mg(2+) is required as a cofactor.

Its subcellular location is the cytoplasm. It carries out the reaction a 2'-deoxyribonucleoside 5'-diphosphate + ATP = a 2'-deoxyribonucleoside 5'-triphosphate + ADP. The enzyme catalyses a ribonucleoside 5'-diphosphate + ATP = a ribonucleoside 5'-triphosphate + ADP. Major role in the synthesis of nucleoside triphosphates other than ATP. The ATP gamma phosphate is transferred to the NDP beta phosphate via a ping-pong mechanism, using a phosphorylated active-site intermediate. The sequence is that of Nucleoside diphosphate kinase from Shigella boydii serotype 4 (strain Sb227).